Here is a 329-residue protein sequence, read N- to C-terminus: BTB/POZ domain-containing adapter for CUL3-mediated RhoA degradation protein 1 (329 aa).

The segment covering Met1–Ser22 has biased composition (low complexity). A disordered region spans residues Met1 to Tyr31. One can recognise a BTB domain in the interval Lys41–Glu109. Positions Ala282 to His303 are disordered.

This sequence belongs to the BACURD family. Homotetramer; forms a two-fold symmetric tetramer in solution. Interacts with CUL3; interaction is direct and forms a 5:5 heterodecamer. Component of the BCR(KCTD13) E3 ubiquitin ligase complex, at least composed of CUL3, KCTD13/BACURD1 and RBX1. Interacts with RHOA; with a preference for RhoA-GDP. Interacts with POLD2 and PCNA. Interacts with SPRTN. Expressed in a wide variety of tissues.

The protein resides in the nucleus. It functions in the pathway protein modification; protein ubiquitination. Its function is as follows. Substrate-specific adapter of a BCR (BTB-CUL3-RBX1) E3 ubiquitin-protein ligase complex required for synaptic transmission. The BCR(KCTD13) E3 ubiquitin ligase complex mediates the ubiquitination of RHOA, leading to its degradation by the proteasome Degradation of RHOA regulates the actin cytoskeleton and promotes synaptic transmission. This is BTB/POZ domain-containing adapter for CUL3-mediated RhoA degradation protein 1 (KCTD13) from Homo sapiens (Human).